Consider the following 95-residue polypeptide: Aspartyl/glutamyl-tRNA(Asn/Gln) amidotransferase subunit C (95 aa).

It belongs to the GatC family. In terms of assembly, heterotrimer of A, B and C subunits.

The enzyme catalyses L-glutamyl-tRNA(Gln) + L-glutamine + ATP + H2O = L-glutaminyl-tRNA(Gln) + L-glutamate + ADP + phosphate + H(+). It catalyses the reaction L-aspartyl-tRNA(Asn) + L-glutamine + ATP + H2O = L-asparaginyl-tRNA(Asn) + L-glutamate + ADP + phosphate + 2 H(+). Functionally, allows the formation of correctly charged Asn-tRNA(Asn) or Gln-tRNA(Gln) through the transamidation of misacylated Asp-tRNA(Asn) or Glu-tRNA(Gln) in organisms which lack either or both of asparaginyl-tRNA or glutaminyl-tRNA synthetases. The reaction takes place in the presence of glutamine and ATP through an activated phospho-Asp-tRNA(Asn) or phospho-Glu-tRNA(Gln). The sequence is that of Aspartyl/glutamyl-tRNA(Asn/Gln) amidotransferase subunit C from Methylobacterium sp. (strain 4-46).